The sequence spans 801 residues: Leucine--tRNA ligase (801 aa).

A 'HIGH' region motif is present at residues 40–51 (PYPSGAGLHVGH). The 'KMSKS' region motif lies at 576 to 580 (KMSKS). Lysine 579 contacts ATP.

The protein belongs to the class-I aminoacyl-tRNA synthetase family.

The protein resides in the cytoplasm. The catalysed reaction is tRNA(Leu) + L-leucine + ATP = L-leucyl-tRNA(Leu) + AMP + diphosphate. The polypeptide is Leucine--tRNA ligase (Exiguobacterium sibiricum (strain DSM 17290 / CCUG 55495 / CIP 109462 / JCM 13490 / 255-15)).